Reading from the N-terminus, the 94-residue chain is Small ribosomal subunit protein bS6 (94 aa).

This sequence belongs to the bacterial ribosomal protein bS6 family.

Its function is as follows. Binds together with bS18 to 16S ribosomal RNA. In Clostridium botulinum (strain Hall / ATCC 3502 / NCTC 13319 / Type A), this protein is Small ribosomal subunit protein bS6.